We begin with the raw amino-acid sequence, 163 residues long: Photosystem II extrinsic protein V (163 aa).

A signal peptide spans 1–26 (MLKRSSWLAALLGLLTVVSTSTHTYA). Heme c-binding residues include Cys-63, Cys-66, His-67, and His-118.

The protein belongs to the cytochrome c family. PsbV subfamily. As to quaternary structure, PSII is composed of 1 copy each of membrane proteins PsbA, PsbB, PsbC, PsbD, PsbE, PsbF, PsbH, PsbI, PsbJ, PsbK, PsbL, PsbM, PsbT, PsbY, PsbZ, Psb30/Ycf12, at least 3 peripheral proteins of the oxygen-evolving complex and a large number of cofactors. It forms dimeric complexes. The extrinsic subunits in red algae are PsbO (OEC33), PsbQ', cytochrome c-550 and PsbU. Requires heme c as cofactor.

It is found in the plastid. Its subcellular location is the chloroplast thylakoid membrane. In terms of biological role, one of the extrinsic, lumenal subunits of photosystem II (PSII). PSII is a light-driven water plastoquinone oxidoreductase, using light energy to abstract electrons from H(2)O, generating a proton gradient subsequently used for ATP formation. The extrinsic proteins stabilize the structure of photosystem II oxygen-evolving complex (OEC), the ion environment of oxygen evolution and protect the OEC against heat-induced inactivation. The protein is Photosystem II extrinsic protein V of Pyropia yezoensis (Susabi-nori).